Consider the following 156-residue polypeptide: MIYKAKLIDQTNKKIAIVASKFNDLIVKQLISGAQESLEMHGIDESNIDIIWVPGALEIPMVAKRIAQVQKYDGIVTLGAVIKGDTDHYDLVINGVANGISQISLSTDVPIVFGVLTTDTLEQAQQRSGAKSGNKGAEVALSLLELINIFEQIKSI.

Residues Phe22, 56–58, and 80–82 contribute to the 5-amino-6-(D-ribitylamino)uracil site; these read ALE and AVI. Position 85–86 (85–86) interacts with (2S)-2-hydroxy-3-oxobutyl phosphate; the sequence is DT. The active-site Proton donor is His88. Phe113 is a 5-amino-6-(D-ribitylamino)uracil binding site. Arg127 lines the (2S)-2-hydroxy-3-oxobutyl phosphate pocket.

It belongs to the DMRL synthase family.

The catalysed reaction is (2S)-2-hydroxy-3-oxobutyl phosphate + 5-amino-6-(D-ribitylamino)uracil = 6,7-dimethyl-8-(1-D-ribityl)lumazine + phosphate + 2 H2O + H(+). It participates in cofactor biosynthesis; riboflavin biosynthesis; riboflavin from 2-hydroxy-3-oxobutyl phosphate and 5-amino-6-(D-ribitylamino)uracil: step 1/2. Its function is as follows. Catalyzes the formation of 6,7-dimethyl-8-ribityllumazine by condensation of 5-amino-6-(D-ribitylamino)uracil with 3,4-dihydroxy-2-butanone 4-phosphate. This is the penultimate step in the biosynthesis of riboflavin. This Leuconostoc mesenteroides subsp. mesenteroides (strain ATCC 8293 / DSM 20343 / BCRC 11652 / CCM 1803 / JCM 6124 / NCDO 523 / NBRC 100496 / NCIMB 8023 / NCTC 12954 / NRRL B-1118 / 37Y) protein is 6,7-dimethyl-8-ribityllumazine synthase.